The following is a 484-amino-acid chain: Fork head protein homolog 1 (484 aa).

Positions 76-142 (VTIGRNTDSL…NGAKVNFRRI (67 aa)) constitute an FHA domain. A DNA-binding region (fork-head) is located at residues 302-393 (IKPPQSYASM…RRDFLNKWNA (92 aa)).

Interacts (via FHA domain) with ECM30, GLN3, URE2, MPH1 AND FDO1. Interacts with the origin recognition complex (ORC) composed of ORC1 to ORC6.

It is found in the nucleus. It localises to the cytoplasm. Its subcellular location is the cytosol. Functionally, transcription factor that regulates the expression of the CLB2 cluster of genes during the G2/M phase of the mitotic cell cycle. The CLB2 cluster of genes includes mitotic regulators such as CLB1, CLB2, CDC5 and CDC20 as well as SWI5 and ACE2, transcription factors required for the subsequent temporal wave of cell cycle regulated gene expression in the M/G1 phase interval. Involved in HMRa silencing. FKH1 and FKH2 associate with the coding regions of active genes and influence, in opposing ways, transcriptional elongation and termination, and coordinate early transcription elongation and pre-mRNA processing. Both FKH1 and FKH2 play a role as regulators of lifespan in collaboration with the anaphase-promoting complex (APC), likely through combined regulation of stress response, genomic stability, and cell cycle regulation. FKH1 and FKH2 function also in controlling yeast cell morphology by preventing preudohyphal growth. Acts as a rate-limiting replication origin activator via its interaction with the origin recognition complex (ORC). Plays a transcription-independent role in recombination donor preference during mating-type switching through binding to the recombination enhancer (RE), a 700-bp cis-acting element that controls recombination along the left arm of chromosome III. This chain is Fork head protein homolog 1, found in Saccharomyces cerevisiae (strain ATCC 204508 / S288c) (Baker's yeast).